The following is a 62-amino-acid chain: uncharacterized protein (62 aa).

This is an uncharacterized protein from Archaeoglobus fulgidus (strain ATCC 49558 / DSM 4304 / JCM 9628 / NBRC 100126 / VC-16).